Here is a 564-residue protein sequence, read N- to C-terminus: Alpha-farnesene synthase (564 aa).

Asp313, Asp317, Thr464, and Glu468 together coordinate Mg(2+). A DDXXD motif motif is present at residues 313–317 (DDVYD).

This sequence belongs to the terpene synthase family. Requires Mg(2+) as cofactor.

The enzyme catalyses (2E,6E)-farnesyl diphosphate = (3E,6E)-alpha-farnesene + diphosphate. Functionally, catalyzes the cyclization of farnesyl diphosphate to (E,E)-alpha-farnesene. In Ricinus communis (Castor bean), this protein is Alpha-farnesene synthase (TPS7).